The sequence spans 102 residues: Small ribosomal subunit protein uS10 (102 aa).

Belongs to the universal ribosomal protein uS10 family. In terms of assembly, part of the 30S ribosomal subunit.

Its function is as follows. Involved in the binding of tRNA to the ribosomes. The polypeptide is Small ribosomal subunit protein uS10 (Bacillus thuringiensis (strain Al Hakam)).